The sequence spans 186 residues: Threonylcarbamoyl-AMP synthase (186 aa).

Residues 3-186 (ELTLDSAVAT…DALSGNVLRS (184 aa)) form the YrdC-like domain.

This sequence belongs to the SUA5 family. TsaC subfamily.

It is found in the cytoplasm. It carries out the reaction L-threonine + hydrogencarbonate + ATP = L-threonylcarbamoyladenylate + diphosphate + H2O. Functionally, required for the formation of a threonylcarbamoyl group on adenosine at position 37 (t(6)A37) in tRNAs that read codons beginning with adenine. Catalyzes the conversion of L-threonine, HCO(3)(-)/CO(2) and ATP to give threonylcarbamoyl-AMP (TC-AMP) as the acyladenylate intermediate, with the release of diphosphate. This is Threonylcarbamoyl-AMP synthase from Stenotrophomonas maltophilia (strain K279a).